The primary structure comprises 313 residues: tRNA dimethylallyltransferase (313 aa).

11–18 provides a ligand contact to ATP; the sequence is GPTAGGKT. 13–18 contacts substrate; the sequence is TAGGKT. 3 interaction with substrate tRNA regions span residues 36–39, 160–164, and 243–248; these read DSAL, QRIGR, and RCVGYR.

This sequence belongs to the IPP transferase family. In terms of assembly, monomer. The cofactor is Mg(2+).

It catalyses the reaction adenosine(37) in tRNA + dimethylallyl diphosphate = N(6)-dimethylallyladenosine(37) in tRNA + diphosphate. Its function is as follows. Catalyzes the transfer of a dimethylallyl group onto the adenine at position 37 in tRNAs that read codons beginning with uridine, leading to the formation of N6-(dimethylallyl)adenosine (i(6)A). The chain is tRNA dimethylallyltransferase from Neisseria meningitidis serogroup B (strain ATCC BAA-335 / MC58).